A 742-amino-acid polypeptide reads, in one-letter code: Synaptic vesicle glycoprotein 2A (742 aa).

The tract at residues 1-57 (MEEGFRDRAAFIRGAKDIAKEVKKHAAKKVVKGLDRVQDEYSRRSYSRFEEEDDDDD) is interaction with SYT1. Over 1–169 (MEEGFRDRAA…GHGRFQWTLY (169 aa)) the chain is Cytoplasmic. Over residues 33 to 49 (GLDRVQDEYSRRSYSRF) the composition is skewed to basic and acidic residues. The tract at residues 33 to 144 (GLDRVQDEYS…GRGEAQRRKE (112 aa)) is disordered. Phosphoserine is present on residues serine 80 and serine 81. A Phosphothreonine modification is found at threonine 84. Residues 122–137 (VRGGLSDGEGPPGGRG) are compositionally biased toward gly residues. Phosphoserine is present on serine 127. A helical membrane pass occupies residues 170-190 (FVLGLALMADGVEVFVVGFVL). Residues 191–205 (PSAEKDMCLSDSNKG) lie on the Extracellular side of the membrane. The helical transmembrane segment at 206-226 (MLGLIVYLGMMVGAFLWGGLA) threads the bilayer. At 227–233 (DRLGRRQ) the chain is on the cytoplasmic side. A helical transmembrane segment spans residues 234–254 (CLLISLSVNSVFAFFSSFVQG). Residues 255-262 (YGTFLFCR) lie on the Extracellular side of the membrane. A helical membrane pass occupies residues 263–283 (LLSGVGIGGSIPIVFSYFSEF). At 284–294 (LAQEKRGEHLS) the chain is on the cytoplasmic side. The chain crosses the membrane as a helical span at residues 295 to 315 (WLCMFWMIGGVYAAAMAWAII). The Extracellular portion of the chain corresponds to 316 to 334 (PHYGWSFQMGSAYQFHSWR). The chain crosses the membrane as a helical span at residues 335–355 (VFVLVCAFPSVFAIGALTTQP). Topologically, residues 356–447 (ESPRFFLENG…CFGPEYRRIT (92 aa)) are cytoplasmic. Serine 393 is modified (phosphoserine). The chain crosses the membrane as a helical span at residues 448 to 468 (LMMMGVWFTMSFSYYGLTVWF). Residues 469 to 598 (PDMIRHLQAV…GTGEGAYMVY (130 aa)) are Extracellular-facing. Phosphotyrosine is present on tyrosine 480. 3 N-linked (GlcNAc...) asparagine glycosylation sites follow: asparagine 498, asparagine 548, and asparagine 573. Residues 599–619 (FVSFLGTLAVLPGNIVSALLM) traverse the membrane as a helical segment. The Cytoplasmic segment spans residues 620–626 (DKIGRLR). A helical transmembrane segment spans residues 627–647 (MLAGSSVMSCVSCFFLSFGNS). Over 648 to 651 (ESAM) the chain is Extracellular. Residues 652-672 (IALLCLFGGVSIASWNALDVL) form a helical membrane-spanning segment. Residues 673-685 (TVELYPSDKRTTA) lie on the Cytoplasmic side of the membrane. The chain crosses the membrane as a helical span at residues 686–708 (FGFLNALCKLAAVLGISIFTSFV). The Extracellular segment spans residues 709 to 712 (GITK). The helical transmembrane segment at 713–731 (AAPILFASAALALGSSLAL) threads the bilayer. At 732-742 (KLPETRGQVLQ) the chain is on the cytoplasmic side.

Belongs to the major facilitator superfamily. Interacts with SYT1/synaptotagmin-1 in a calcium-dependent manner. Binds the adapter protein complex AP-2. As to quaternary structure, (Microbial infection) Interacts with C.botulinum neurotoxin type A2 (BoNT/A, botA). Interaction is improved by glycosylation of SV2. Post-translationally, phosphorylation by CK1 of the N-terminal cytoplasmic domain regulates interaction with SYT1. N-glycosylated.

The protein localises to the presynapse. Its subcellular location is the cytoplasmic vesicle. It is found in the secretory vesicle. It localises to the synaptic vesicle membrane. Plays a role in the control of regulated secretion in neural and endocrine cells, enhancing selectively low-frequency neurotransmission. Positively regulates vesicle fusion by maintaining the readily releasable pool of secretory vesicles. Functionally, (Microbial infection) Receptor for the C.botulinum neurotoxin type A2 (BoNT/A, botA); glycosylation is not essential but enhances the interaction. Probably also serves as a receptor for the closely related C.botulinum neurotoxin type A1. The chain is Synaptic vesicle glycoprotein 2A (SV2A) from Homo sapiens (Human).